The primary structure comprises 85 residues: uncharacterized protein (85 aa).

The disordered stretch occupies residues 1–85 (MRWRPSSWSA…DQEQCGQHCR (85 aa)). The span at 47-61 (ASVEGEGGRHADRHG) shows a compositional bias: basic and acidic residues.

This is an uncharacterized protein from Streptomyces lividans.